The primary structure comprises 578 residues: Arginine--tRNA ligase (578 aa).

Positions 122–132 (PNVAKEMHVGH) match the 'HIGH' region motif.

It belongs to the class-I aminoacyl-tRNA synthetase family. As to quaternary structure, monomer.

It is found in the cytoplasm. The enzyme catalyses tRNA(Arg) + L-arginine + ATP = L-arginyl-tRNA(Arg) + AMP + diphosphate. This is Arginine--tRNA ligase from Shigella sonnei (strain Ss046).